Consider the following 660-residue polypeptide: Translation factor GUF1 homolog, mitochondrial (660 aa).

The region spanning 62–243 (EKIRNFSIIA…TIIEKIPPPT (182 aa)) is the tr-type G domain. Residues 71–78 (AHIDHGKS), 136–140 (DTPGH), and 190–193 (NKID) each bind GTP.

Belongs to the TRAFAC class translation factor GTPase superfamily. Classic translation factor GTPase family. LepA subfamily.

The protein resides in the mitochondrion inner membrane. The catalysed reaction is GTP + H2O = GDP + phosphate + H(+). Its function is as follows. Promotes mitochondrial protein synthesis. May act as a fidelity factor of the translation reaction, by catalyzing a one-codon backward translocation of tRNAs on improperly translocated ribosomes. Binds to mitochondrial ribosomes in a GTP-dependent manner. This Trichoplax adhaerens (Trichoplax reptans) protein is Translation factor GUF1 homolog, mitochondrial.